A 311-amino-acid polypeptide reads, in one-letter code: Inositol oxygenase 1 (311 aa).

The segment covering 1-11 has biased composition (basic and acidic residues); the sequence is MTILIDRHSDQ. Residues 1–29 are disordered; sequence MTILIDRHSDQNDAGDEIVEKNQGNGKEE. Substrate is bound by residues R52 and 109–111; that span reads DES. Residues H122, H147, and D148 each coordinate Fe cation. Residues K151 and 168-169 contribute to the substrate site; that span reads GD. Fe cation is bound by residues H220, H246, and D279. 246 to 247 provides a ligand contact to substrate; sequence HS.

Belongs to the myo-inositol oxygenase family. The cofactor is Fe cation. As to expression, expressed in roots, young leaves, stems, flowers and siliques.

Its subcellular location is the cytoplasm. The catalysed reaction is myo-inositol + O2 = D-glucuronate + H2O + H(+). It participates in polyol metabolism; myo-inositol degradation into D-glucuronate; D-glucuronate from myo-inositol: step 1/1. Catalyzes the oxygenative cleavage of myo-inositol to D-glucuronate. Involved in the biosynthesis of UDP-glucuronic acid (UDP-GlcA), providing nucleotide sugars for cell-wall polymers. May be also involved in plant ascorbate biosynthesis. The sequence is that of Inositol oxygenase 1 (MIOX1) from Arabidopsis thaliana (Mouse-ear cress).